Consider the following 706-residue polypeptide: MISSVRNCGTIQRFCTTSISLLQKPVEENIVRISNQVMVKFDPNSHLRSLINAGNLRAARQVFDKMPHGDIVSWTSIIKRYVTANNSDEALILFSAMRVVDHAVSPDTSVLSVVLKACGQSSNIAYGESLHAYAVKTSLLSSVYVGSSLLDMYKRVGKIDKSCRVFSEMPFRNAVTWTAIITGLVHAGRYKEGLTYFSEMSRSEELSDTYTFAIALKACAGLRQVKYGKAIHTHVIVRGFVTTLCVANSLATMYTECGEMQDGLCLFENMSERDVVSWTSLIVAYKRIGQEVKAVETFIKMRNSQVPPNEQTFASMFSACASLSRLVWGEQLHCNVLSLGLNDSLSVSNSMMKMYSTCGNLVSASVLFQGMRCRDIISWSTIIGGYCQAGFGEEGFKYFSWMRQSGTKPTDFALASLLSVSGNMAVIEGGRQVHALALCFGLEQNSTVRSSLINMYSKCGSIKEASMIFGETDRDDIVSLTAMINGYAEHGKSKEAIDLFEKSLKVGFRPDSVTFISVLTACTHSGQLDLGFHYFNMMQETYNMRPAKEHYGCMVDLLCRAGRLSDAEKMINEMSWKKDDVVWTTLLIACKAKGDIERGRRAAERILELDPTCATALVTLANIYSSTGNLEEAANVRKNMKAKGVIKEPGWSSIKIKDCVSAFVSGDRFHPQSEDIYNILELAVSGAEAHRFDCTLKRAFGVNLYS.

PPR repeat units follow at residues 39–69 (VKFDPNSHLRSLINAGNLRAARQVFDKMPHG), 70–104 (DIVSWTSIIKRYVTANNSDEALILFSAMRVVDHAV), 107–141 (DTSVLSVVLKACGQSSNIAYGESLHAYAVKTSLLS), 142–172 (SVYVGSSLLDMYKRVGKIDKSCRVFSEMPFR), 173–203 (NAVTWTAIITGLVHAGRYKEGLTYFSEMSRS), 208–242 (DTYTFAIALKACAGLRQVKYGKAIHTHVIVRGFVT), 243–273 (TLCVANSLATMYTECGEMQDGLCLFENMSER), 274–308 (DVVSWTSLIVAYKRIGQEVKAVETFIKMRNSQVPP), 309–343 (NEQTFASMFSACASLSRLVWGEQLHCNVLSLGLND), 344–374 (SLSVSNSMMKMYSTCGNLVSASVLFQGMRCR), 375–409 (DIISWSTIIGGYCQAGFGEEGFKYFSWMRQSGTKP), 410–444 (TDFALASLLSVSGNMAVIEGGRQVHALALCFGLEQ), 445–475 (NSTVRSSLINMYSKCGSIKEASMIFGETDRD), 476–510 (DIVSLTAMINGYAEHGKSKEAIDLFEKSLKVGFRP), 511–541 (DSVTFISVLTACTHSGQLDLGFHYFNMMQET), and 547–577 (AKEHYGCMVDLLCRAGRLSDAEKMINEMSWK). The segment at 582–657 (VWTTLLIACK…EPGWSSIKIK (76 aa)) is type E motif. The tract at residues 658–688 (DCVSAFVSGDRFHPQSEDIYNILELAVSGAE) is type E(+) motif.

The protein belongs to the PPR family. PCMP-E subfamily.

The protein is Putative pentatricopeptide repeat-containing protein At3g47840 (PCMP-E43) of Arabidopsis thaliana (Mouse-ear cress).